The following is a 345-amino-acid chain: Dihydroorotate dehydrogenase (quinone) (345 aa).

FMN contacts are provided by residues 65–69 (AGLDK) and Thr-89. Substrate is bound at residue Lys-69. 114–118 (NRMGF) contributes to the substrate binding site. FMN is bound by residues Asn-142 and Asn-175. Asn-175 provides a ligand contact to substrate. The active-site Nucleophile is the Ser-178. Asn-180 is a binding site for substrate. Lys-220 and Thr-248 together coordinate FMN. Residue 249–250 (NT) participates in substrate binding. FMN-binding positions include Gly-271, Gly-300, and 321–322 (YT).

The protein belongs to the dihydroorotate dehydrogenase family. Type 2 subfamily. Monomer. FMN serves as cofactor.

The protein localises to the cell membrane. The catalysed reaction is (S)-dihydroorotate + a quinone = orotate + a quinol. The protein operates within pyrimidine metabolism; UMP biosynthesis via de novo pathway; orotate from (S)-dihydroorotate (quinone route): step 1/1. In terms of biological role, catalyzes the conversion of dihydroorotate to orotate with quinone as electron acceptor. The sequence is that of Dihydroorotate dehydrogenase (quinone) from Burkholderia multivorans (strain ATCC 17616 / 249).